The chain runs to 416 residues: MGKTIAEKILSEKSKSDAYAGDIVVAEIDQIALQDGTAPLAIRQLMELGTEVRAADRTHFFVDHAAPSPRRELSNDQKFIYEFAKKVGADFNPPGEGIIHQIMVERYVKPGDLAVGADSHTCTYGGIGAFSTGMGSTDVAVAIALGKNWFRVPESFRVQLDGSLPKGVFAKDVILKLIGDLGVDGATYKALEFHGECAENMTVEERLTIANMAVECGAKAGIFESDENTRKFLAELGREGDFREVKADEDAEYEKEIYMDVSSLVPVVSKPHNVDNVAEISEVEGTEVNQVYIGTCTNGRLSDLEVAARILKGRKVKEGVRLIVVPASRRVYLQALDKGLIRVFVEAGGMVLNPGCGPCVGIHQGILADGEVCISTQNRNFKGRMGNPNAEIFLASPATAAASAVKGYIADPREFL.

Positions 296, 356, and 359 each coordinate [4Fe-4S] cluster.

The protein belongs to the aconitase/IPM isomerase family. LeuC type 2 subfamily. Heterodimer of LeuC and LeuD. Requires [4Fe-4S] cluster as cofactor.

It carries out the reaction (2R,3S)-3-isopropylmalate = (2S)-2-isopropylmalate. It participates in amino-acid biosynthesis; L-leucine biosynthesis; L-leucine from 3-methyl-2-oxobutanoate: step 2/4. Catalyzes the isomerization between 2-isopropylmalate and 3-isopropylmalate, via the formation of 2-isopropylmaleate. The protein is 3-isopropylmalate dehydratase large subunit 2 of Archaeoglobus fulgidus (strain ATCC 49558 / DSM 4304 / JCM 9628 / NBRC 100126 / VC-16).